The primary structure comprises 65 residues: Hirudin-3B (65 aa).

The interval 1–3 (VVY) is interaction with thrombin active site. 3 disulfides stabilise this stretch: cysteine 6–cysteine 14, cysteine 16–cysteine 28, and cysteine 22–cysteine 39. Residues 40-65 (VTGEGTPKPQSHNDGDFEEIPEEYLQ) form a disordered region. Residue threonine 45 is glycosylated (O-linked (GalNAc...) threonine). Positions 55–65 (DFEEIPEEYLQ) are interaction with fibrinogen-binding exosite of thrombin. Positions 55–65 (DFEEIPEEYLQ) are enriched in acidic residues. Tyrosine 63 is subject to Sulfotyrosine.

Belongs to the protease inhibitor I14 (hirudin) family.

It is found in the secreted. In terms of biological role, hirudin is a potent thrombin-specific protease inhibitor. It forms a stable non-covalent complex with alpha-thrombin, thereby abolishing its ability to cleave fibrinogen. In Hirudo medicinalis (Medicinal leech), this protein is Hirudin-3B.